Reading from the N-terminus, the 423-residue chain is MKVLLIGSGGREHALAWKIAQSPRLTKLYAAPGNPGIAEEAAIVDLHTENHEDVVDFCRTHAIDFVVVGPEAPLVAGLGDVLRAADIPTFGPSAAAAQLEGSKGFTKDLCARYGIPTGAYRRFTDAEPAKAYIREEGAPIVIKADGLAAGKGVTVAMSLDEAFAAVDECFAGAFGAAGAEVVVEAYLDGEEASFFCLCDGKSVLPLASAQDHKRVGDGDTGPNTGGMGAYSPAPVMTAEMVERTMKEIIEPTVRGMAESGYPFTGVFFAGLMITEKGPELIEYNVRFGDPECQVLMMRLESDLLPLLYAAATGTLEGMKAEWRDEAALTVVMASRGYPGAYEKDTPIAALPDASAATKVFHAGTAMKGGGLVAAGGRVLNVTATGKTVGEAKDAAYAAVRDVSWENGFYRNDIGWRAVARETA.

In terms of domain architecture, ATP-grasp spans 107–312; the sequence is KDLCARYGIP…LLPLLYAAAT (206 aa). Residue 133–193 participates in ATP binding; it reads IREEGAPIVI…EAYLDGEEAS (61 aa). Residues Glu282 and Asn284 each coordinate Mg(2+).

Belongs to the GARS family. Requires Mg(2+) as cofactor. Mn(2+) is required as a cofactor.

The catalysed reaction is 5-phospho-beta-D-ribosylamine + glycine + ATP = N(1)-(5-phospho-beta-D-ribosyl)glycinamide + ADP + phosphate + H(+). It participates in purine metabolism; IMP biosynthesis via de novo pathway; N(1)-(5-phospho-D-ribosyl)glycinamide from 5-phospho-alpha-D-ribose 1-diphosphate: step 2/2. The sequence is that of Phosphoribosylamine--glycine ligase from Rhizobium meliloti (strain 1021) (Ensifer meliloti).